Consider the following 467-residue polypeptide: Nuclear distribution protein nudF (467 aa).

The LisH domain maps to 9 to 41 (QAEELHKSIIAYLASVNLTESSAALRAELGDSV). Positions 60 to 87 (TSVVRLQKKIMDLESRCAALQSELDSAT) form a coiled coil. 8 WD repeats span residues 113–154 (GHRN…RTVK), 156–196 (HTKA…KNIR), 200–247 (GHDH…CVKT), 250–289 (GHVDWVRAVAPSIDGRFLLAAGDDRIPRLWDLSSAETKST), 292–352 (GHEH…IKTL), 354–393 (GHDNWVRALAFHPGGKHLLSVADDKTIRCWDLTQECKCVR), 398–428 (AHGHFVTCLRWAPPLIKDGGANGEAETNGTP), and 429–466 (AATSTTNGVRPDPNVATKISIRCVIATGSVDQKVRIFA). The segment at 417-439 (GANGEAETNGTPAATSTTNGVRP) is disordered. The span at 422-436 (AETNGTPAATSTTNG) shows a compositional bias: polar residues.

The protein belongs to the WD repeat LIS1/nudF family. As to quaternary structure, self-associates. Interacts with nudE and dynein.

It is found in the cytoplasm. It localises to the cytoskeleton. Its subcellular location is the spindle pole. In terms of biological role, positively regulates the activity of the minus-end directed microtubule motor protein dynein. May enhance dynein-mediated microtubule sliding by targeting dynein to the microtubule plus end. Required for nuclear migration during vegetative growth as well as development. Required for retrograde early endosome (EE) transport from the hyphal tip. Required for localization of dynein to the mitotic spindle poles. Recruits additional proteins to the dynein complex at SPBs. The polypeptide is Nuclear distribution protein nudF (Aspergillus fumigatus (strain CBS 144.89 / FGSC A1163 / CEA10) (Neosartorya fumigata)).